A 194-amino-acid chain; its full sequence is Glycerol-3-phosphate acyltransferase (194 aa).

5 consecutive transmembrane segments (helical) span residues Glu4–Ala24, Trp80–Phe100, Val112–Val132, Tyr137–Glu157, and Leu161–Ile181.

The protein belongs to the PlsY family. As to quaternary structure, probably interacts with PlsX.

It is found in the cell inner membrane. It carries out the reaction an acyl phosphate + sn-glycerol 3-phosphate = a 1-acyl-sn-glycero-3-phosphate + phosphate. Its pathway is lipid metabolism; phospholipid metabolism. Its function is as follows. Catalyzes the transfer of an acyl group from acyl-phosphate (acyl-PO(4)) to glycerol-3-phosphate (G3P) to form lysophosphatidic acid (LPA). This enzyme utilizes acyl-phosphate as fatty acyl donor, but not acyl-CoA or acyl-ACP. In Geobacter sulfurreducens (strain ATCC 51573 / DSM 12127 / PCA), this protein is Glycerol-3-phosphate acyltransferase.